Here is a 527-residue protein sequence, read N- to C-terminus: MLLVRASRAVRCCCSYSLHKTVTFQARHSLYSAHKVHSNGHFHLPLSGIRCFFSGSPYWKAKKHGGEHSKAGNLTAIDDYWLEEVEEELEDLDLSPHTASLLQGAHRVFIVHPDVKWGAKKDQLSTADLQVAEAAALVHSLPNWSVVNTLIMSTKSPDSKLIFGKGNFQTLTDVIKGHPQITAVFLNVERLSSLTEKEMEEAWGVKVFDRYTVVLNIFRFNAHTKEAKLQIALAELPLLRSSLKNETAHMDQQGGGSRYIMGSGETFLEVQQRLLKEREIKIKYALEKVKKKRNLLRTQRRRREFPIISILGYTNSGKTTLIKALTGDEGLQPRDQLFATLDVTSHAGLLPCHMPVIYVDTIGFLSQLPHNLIESFSATLEDVVHSDLLIHVRDISHPETTKQKASVLSVLKNLGLPQQLLDTMIEVQNKIDLIDMPENTEDSVLSVSALHGHGLEDLKQQVETAVMKSTGRNVVTIKVNLESPQLSWLYKEASVQEVKVLPEDGTARVRVIITNSAYGKYRKLFCK.

The region spanning P306 to T470 is the Hflx-type G domain. GTP-binding positions include G312 to T319, F338 to D342, D360 to G363, N429 to D432, and S448 to L450. Residues T319 and T340 each coordinate Mg(2+).

The protein belongs to the TRAFAC class OBG-HflX-like GTPase superfamily. HflX GTPase family. Mg(2+) is required as a cofactor.

This is Putative GTP-binding protein 6 (gtpbp6) from Xenopus laevis (African clawed frog).